Here is a 171-residue protein sequence, read N- to C-terminus: Large ribosomal subunit protein uL10 (171 aa).

It belongs to the universal ribosomal protein uL10 family. As to quaternary structure, part of the ribosomal stalk of the 50S ribosomal subunit. The N-terminus interacts with L11 and the large rRNA to form the base of the stalk. The C-terminus forms an elongated spine to which L12 dimers bind in a sequential fashion forming a multimeric L10(L12)X complex.

Forms part of the ribosomal stalk, playing a central role in the interaction of the ribosome with GTP-bound translation factors. The polypeptide is Large ribosomal subunit protein uL10 (Corynebacterium diphtheriae (strain ATCC 700971 / NCTC 13129 / Biotype gravis)).